Here is a 1023-residue protein sequence, read N- to C-terminus: Probable histidine kinase 3 (1023 aa).

Residues 1 to 80 are Cytoplasmic-facing; sequence MDEMSCGGGG…RGWRVVRETW (80 aa). The chain crosses the membrane as a helical span at residues 81–101; sequence WWVLLLWILAGSLGSFYLFLF. The Extracellular segment spans residues 102–387; that stretch reads MNAQSLDKRR…CRFEKKPPWP (286 aa). Residues 151 to 352 enclose the CHASE domain; that stretch reads TPSAIDQMTF…TNESPISMYG (202 aa). A helical membrane pass occupies residues 388 to 408; it reads WLAITSSFGTLVIALLTGHIF. The Cytoplasmic segment spans residues 409 to 1023; the sequence is QATVHRIAKV…RFFQNHDQVE (615 aa). Residues 445–715 form the Histidine kinase domain; it reads TVSHEIRTPM…TFTFTAVLMR (271 aa). H448 is modified (phosphohistidine; by autocatalysis). 2 Response regulatory domains span residues 732–854 and 880–1016; these read NALV…RRAL and QIIV…ARFF. A 4-aspartylphosphate modification is found at D783. The interval 812 to 831 is disordered; that stretch reads LFLLGSSASSPKGGSDTSRE. Over residues 817-827 the composition is skewed to polar residues; it reads SSASSPKGGSD. D930 carries the post-translational modification 4-aspartylphosphate.

Post-translationally, activation probably requires a transfer of a phosphate group between a His in the transmitter domain and an Asp of the receiver domain.

The protein resides in the cell membrane. It carries out the reaction ATP + protein L-histidine = ADP + protein N-phospho-L-histidine.. Functionally, cytokinin receptor related to bacterial two-component regulators. Functions as a histidine kinase and transmits the stress signal to a downstream MAPK cascade. The chain is Probable histidine kinase 3 from Oryza sativa subsp. indica (Rice).